A 327-amino-acid chain; its full sequence is RNA ligase 1 (327 aa).

It depends on Mg(2+) as a cofactor. Mn(2+) is required as a cofactor. Post-translationally, AMPylates itself (auto-AMPylation).

The catalysed reaction is ATP + (ribonucleotide)n-3'-hydroxyl + 5'-phospho-(ribonucleotide)m = (ribonucleotide)n+m + AMP + diphosphate.. Functions as an RNA ligase, in vitro. The ligation reaction entails three nucleotidyl transfer steps. In the first step, the RNA ligase reacts with ATP in the absence of nucleic acid to form a covalent ligase-AMP intermediate and release pyrophosphate. In step 2, the ligase-AMP binds to the nucleic acid and transfers the adenylate to the 5'-PO4 terminus to form an adenylylated intermediate. In step 3, the RNA ligase directs the attack of the 3'-OH on the 5'-phosphoanhydride linkage, resulting in a repaired 3'-5' phosphodiester and release of AMP. Exhibits selectivity for single-stranded RNA substrates and may not have nick-sealing activity on double-stranded DNA-RNA hybrids. May play a role in maintaining RNA integrity under stress conditions, for example in response to reactive oxygen species (ROS). The protein is RNA ligase 1 of Mus musculus (Mouse).